We begin with the raw amino-acid sequence, 140 residues long: Transcription antitermination protein NusB (140 aa).

It belongs to the NusB family.

Involved in transcription antitermination. Required for transcription of ribosomal RNA (rRNA) genes. Binds specifically to the boxA antiterminator sequence of the ribosomal RNA (rrn) operons. This Sorangium cellulosum (strain So ce56) (Polyangium cellulosum (strain So ce56)) protein is Transcription antitermination protein NusB.